The primary structure comprises 369 residues: Ferredoxin--NADP reductase 2 (369 aa).

Positions 1–21 (MDLSIPNPVADATRQVEGGSP) are disordered. Residues aspartate 58, glutamine 66, tyrosine 71, valine 111, phenylalanine 146, aspartate 311, and threonine 352 each contribute to the FAD site.

It belongs to the ferredoxin--NADP reductase type 2 family. Homodimer. It depends on FAD as a cofactor.

The enzyme catalyses 2 reduced [2Fe-2S]-[ferredoxin] + NADP(+) + H(+) = 2 oxidized [2Fe-2S]-[ferredoxin] + NADPH. In Cupriavidus taiwanensis (strain DSM 17343 / BCRC 17206 / CCUG 44338 / CIP 107171 / LMG 19424 / R1) (Ralstonia taiwanensis (strain LMG 19424)), this protein is Ferredoxin--NADP reductase 2.